Here is a 356-residue protein sequence, read N- to C-terminus: Biotin synthase (356 aa).

The region spanning glycine 54–leucine 278 is the Radical SAM core domain. [4Fe-4S] cluster-binding residues include cysteine 69, cysteine 73, and cysteine 76. [2Fe-2S] cluster-binding residues include cysteine 113, cysteine 144, cysteine 204, and arginine 282.

It belongs to the radical SAM superfamily. Biotin synthase family. Homodimer. [4Fe-4S] cluster serves as cofactor. It depends on [2Fe-2S] cluster as a cofactor.

It carries out the reaction (4R,5S)-dethiobiotin + (sulfur carrier)-SH + 2 reduced [2Fe-2S]-[ferredoxin] + 2 S-adenosyl-L-methionine = (sulfur carrier)-H + biotin + 2 5'-deoxyadenosine + 2 L-methionine + 2 oxidized [2Fe-2S]-[ferredoxin]. Its pathway is cofactor biosynthesis; biotin biosynthesis; biotin from 7,8-diaminononanoate: step 2/2. In terms of biological role, catalyzes the conversion of dethiobiotin (DTB) to biotin by the insertion of a sulfur atom into dethiobiotin via a radical-based mechanism. This is Biotin synthase from Novosphingobium aromaticivorans (strain ATCC 700278 / DSM 12444 / CCUG 56034 / CIP 105152 / NBRC 16084 / F199).